Reading from the N-terminus, the 476-residue chain is Inactive glucose-1-phosphate adenylyltransferase small subunit 2, chloroplastic (476 aa).

The N-terminal 55 residues, 1–55, are a transit peptide targeting the chloroplast; that stretch reads MQISSSSFITKFTNLHMVRSTSDHHQWRHNYNLKQLFIPNLSVSNSQHLPLNQSV.

Belongs to the bacterial/plant glucose-1-phosphate adenylyltransferase family. As to quaternary structure, heterotetramer. Expressed at very low levels in leaves, inflorescences, fruits, and roots.

It localises to the plastid. The protein resides in the chloroplast. The sequence is that of Inactive glucose-1-phosphate adenylyltransferase small subunit 2, chloroplastic from Arabidopsis thaliana (Mouse-ear cress).